Reading from the N-terminus, the 272-residue chain is 2-dehydro-3-deoxyphosphooctonate aldolase (272 aa).

The protein belongs to the KdsA family.

Its subcellular location is the cytoplasm. It catalyses the reaction D-arabinose 5-phosphate + phosphoenolpyruvate + H2O = 3-deoxy-alpha-D-manno-2-octulosonate-8-phosphate + phosphate. The protein operates within carbohydrate biosynthesis; 3-deoxy-D-manno-octulosonate biosynthesis; 3-deoxy-D-manno-octulosonate from D-ribulose 5-phosphate: step 2/3. It participates in bacterial outer membrane biogenesis; lipopolysaccharide biosynthesis. The chain is 2-dehydro-3-deoxyphosphooctonate aldolase from Geobacter metallireducens (strain ATCC 53774 / DSM 7210 / GS-15).